A 414-amino-acid polypeptide reads, in one-letter code: Arrestin domain-containing protein 3 (414 aa).

2 short sequence motifs (PPxY motif) span residues 346–349 (PPSY) and 391–394 (PPLY). The disordered stretch occupies residues 393 to 414 (LYSEIDPNPDQSSEDRPSCPSR). Positions 405–414 (SEDRPSCPSR) are enriched in basic and acidic residues.

It belongs to the arrestin family. In terms of assembly, interacts (via PPxY motifs) with NEDD4 (via WW domains). Interacts with ADRB2. Interacts with ADRB3. Interacts with HGS (via PPxY motifs). Does not bind TXN (thioredoxin). Interacts with ITCH.

The protein localises to the cytoplasm. It is found in the cell membrane. The protein resides in the lysosome. Its subcellular location is the endosome. It localises to the early endosome. Adapter protein that plays a role in regulating cell-surface expression of adrenergic receptors and probably also other G protein-coupled receptors. Plays a role in NEDD4-mediated ubiquitination and endocytosis af activated ADRB2 and subsequent ADRB2 degradation. May recruit NEDD4 to ADRB2. Alternatively, may function as adapter protein that does not play a major role in recruiting NEDD4 to ADRB2, but rather plays a role in a targeting ADRB2 to endosomes. The polypeptide is Arrestin domain-containing protein 3 (Arrdc3) (Rattus norvegicus (Rat)).